Consider the following 120-residue polypeptide: Aspartate 1-decarboxylase (120 aa).

Residue Ser-25 is the Schiff-base intermediate with substrate; via pyruvic acid of the active site. Pyruvic acid (Ser) is present on Ser-25. Thr-57 serves as a coordination point for substrate. Tyr-58 serves as the catalytic Proton donor. Residue 73–75 coordinates substrate; sequence GAA.

This sequence belongs to the PanD family. Heterooctamer of four alpha and four beta subunits. Pyruvate is required as a cofactor. In terms of processing, is synthesized initially as an inactive proenzyme, which is activated by self-cleavage at a specific serine bond to produce a beta-subunit with a hydroxyl group at its C-terminus and an alpha-subunit with a pyruvoyl group at its N-terminus.

It localises to the cytoplasm. It catalyses the reaction L-aspartate + H(+) = beta-alanine + CO2. It functions in the pathway cofactor biosynthesis; (R)-pantothenate biosynthesis; beta-alanine from L-aspartate: step 1/1. In terms of biological role, catalyzes the pyruvoyl-dependent decarboxylation of aspartate to produce beta-alanine. The protein is Aspartate 1-decarboxylase of Deinococcus deserti (strain DSM 17065 / CIP 109153 / LMG 22923 / VCD115).